The sequence spans 502 residues: 4,4'-diapophytoene desaturase (4,4'-diaponeurosporene-forming) (502 aa).

Val5–Ala17 serves as a coordination point for FAD.

It belongs to the carotenoid/retinoid oxidoreductase family. CrtN subfamily.

The catalysed reaction is 15-cis-4,4'-diapophytoene + 3 FAD + 3 H(+) = all-trans-4,4'-diaponeurosporene + 3 FADH2. It functions in the pathway carotenoid biosynthesis; staphyloxanthin biosynthesis; staphyloxanthin from farnesyl diphosphate: step 2/5. Its function is as follows. Involved in the biosynthesis of the yellow-orange carotenoid staphyloxanthin, which plays a role in the virulence via its protective function against oxidative stress. Catalyzes three successive dehydrogenation reactions that lead to the introduction of three double bonds into 4,4'-diapophytoene (dehydrosqualene), with 4,4'-diapophytofluene and 4,4'-diapo-zeta-carotene as intermediates, and 4,4'-diaponeurosporene (the major deep-yellow pigment in staphylococci strains) as the end product. The sequence is that of 4,4'-diapophytoene desaturase (4,4'-diaponeurosporene-forming) from Staphylococcus aureus (strain USA300).